Reading from the N-terminus, the 215-residue chain is 3-isopropylmalate dehydratase small subunit (215 aa).

It belongs to the LeuD family. LeuD type 1 subfamily. As to quaternary structure, heterodimer of LeuC and LeuD.

The enzyme catalyses (2R,3S)-3-isopropylmalate = (2S)-2-isopropylmalate. It functions in the pathway amino-acid biosynthesis; L-leucine biosynthesis; L-leucine from 3-methyl-2-oxobutanoate: step 2/4. Catalyzes the isomerization between 2-isopropylmalate and 3-isopropylmalate, via the formation of 2-isopropylmaleate. The chain is 3-isopropylmalate dehydratase small subunit from Polynucleobacter asymbioticus (strain DSM 18221 / CIP 109841 / QLW-P1DMWA-1) (Polynucleobacter necessarius subsp. asymbioticus).